Consider the following 450-residue polypeptide: tRNA-2-methylthio-N(6)-dimethylallyladenosine synthase (450 aa).

Residues 3–119 form the MTTase N-terminal domain; that stretch reads RRYYITTFGC…LGELLEQVWN (117 aa). Cysteine 12, cysteine 48, cysteine 82, cysteine 154, cysteine 158, and cysteine 161 together coordinate [4Fe-4S] cluster. The Radical SAM core domain maps to 140 to 377; the sequence is RDSTVTAWVN…NHLVAKIAGD (238 aa). A TRAM domain is found at 380–444; the sequence is QRYLGREEVV…AFSLSGVPLA (65 aa).

Belongs to the methylthiotransferase family. MiaB subfamily. As to quaternary structure, monomer. [4Fe-4S] cluster serves as cofactor.

The protein localises to the cytoplasm. The catalysed reaction is N(6)-dimethylallyladenosine(37) in tRNA + (sulfur carrier)-SH + AH2 + 2 S-adenosyl-L-methionine = 2-methylsulfanyl-N(6)-dimethylallyladenosine(37) in tRNA + (sulfur carrier)-H + 5'-deoxyadenosine + L-methionine + A + S-adenosyl-L-homocysteine + 2 H(+). Functionally, catalyzes the methylthiolation of N6-(dimethylallyl)adenosine (i(6)A), leading to the formation of 2-methylthio-N6-(dimethylallyl)adenosine (ms(2)i(6)A) at position 37 in tRNAs that read codons beginning with uridine. This is tRNA-2-methylthio-N(6)-dimethylallyladenosine synthase from Thermosynechococcus vestitus (strain NIES-2133 / IAM M-273 / BP-1).